We begin with the raw amino-acid sequence, 364 residues long: GDP-fucose transporter 1 (364 aa).

The next 8 helical transmembrane spans lie at 34 to 56 (FVLRALQIALVVSLYWVTSISMV), 76 to 98 (VTFYQCLVTVLLCKGLSSLATCC), 111 to 130 (LKVARSVLPLSVVFIGMITF), 140 to 162 (VAFYNVGRSLTTVFNVLLSYLLL), 167 to 185 (SFYALLTCSVIIGGFWLGV), 195 to 214 (SWTGTLFGVLASLCVSLNAI), 227 to 249 (IWRLTFYNNANACVLFLPLLLAL), and 264 to 286 (AHFWAMMTLGGLFGFAIGYVTGL). Positions 345 to 364 (MKKTQEEPHPRENEKSNMEV) are disordered.

It belongs to the TPT transporter family. SLC35C subfamily.

It localises to the golgi apparatus membrane. The catalysed reaction is GMP(out) + GDP-beta-L-fucose(in) = GMP(in) + GDP-beta-L-fucose(out). Antiporter specific for GDP-l-fucose and depending on the concomitant reverse transport of GMP. Involved in GDP-fucose import from the cytoplasm into the Golgi lumen. The polypeptide is GDP-fucose transporter 1 (SLC35C1) (Bos taurus (Bovine)).